A 226-amino-acid chain; its full sequence is Fibronectin type III domain-containing protein 10 (226 aa).

Positions 1-20 (MRAPPLLLLLAACAPPPCAA) are cleaved as a signal peptide. At 21–182 (AAPTPPGWEP…FTAEPAGMQD (162 aa)) the chain is on the extracellular side. In terms of domain architecture, Fibronectin type-III spans 74 to 166 (PAGRSLRASV…PAAAAPETPE (93 aa)). 2 N-linked (GlcNAc...) asparagine glycosylation sites follow: asparagine 86 and asparagine 109. A helical membrane pass occupies residues 183 to 203 (IVVAMTAVGGSICVMLVVICL). At 204 to 226 (LVAYITENLMRPALARPGLRRHP) the chain is on the cytoplasmic side.

It localises to the membrane. The sequence is that of Fibronectin type III domain-containing protein 10 (FNDC10) from Homo sapiens (Human).